We begin with the raw amino-acid sequence, 475 residues long: Ribulose bisphosphate carboxylase large chain (475 aa).

Residues 1-2 (MS) constitute a propeptide that is removed on maturation. P3 carries the post-translational modification N-acetylproline. Residue K14 is modified to N6,N6,N6-trimethyllysine. Substrate contacts are provided by N123 and T173. Catalysis depends on K175, which acts as the Proton acceptor. K177 is a binding site for substrate. Mg(2+) is bound by residues K201, D203, and E204. At K201 the chain carries N6-carboxylysine. Catalysis depends on H294, which acts as the Proton acceptor. The substrate site is built by R295, H327, and S379.

Belongs to the RuBisCO large chain family. Type I subfamily. As to quaternary structure, heterohexadecamer of 8 large chains and 8 small chains; disulfide-linked. The disulfide link is formed within the large subunit homodimers. Requires Mg(2+) as cofactor. The disulfide bond which can form in the large chain dimeric partners within the hexadecamer appears to be associated with oxidative stress and protein turnover.

It is found in the plastid. It localises to the chloroplast. It catalyses the reaction 2 (2R)-3-phosphoglycerate + 2 H(+) = D-ribulose 1,5-bisphosphate + CO2 + H2O. The enzyme catalyses D-ribulose 1,5-bisphosphate + O2 = 2-phosphoglycolate + (2R)-3-phosphoglycerate + 2 H(+). RuBisCO catalyzes two reactions: the carboxylation of D-ribulose 1,5-bisphosphate, the primary event in carbon dioxide fixation, as well as the oxidative fragmentation of the pentose substrate in the photorespiration process. Both reactions occur simultaneously and in competition at the same active site. This is Ribulose bisphosphate carboxylase large chain from Chlorokybus atmophyticus (Soil alga).